We begin with the raw amino-acid sequence, 274 residues long: DegV domain-containing protein Cgl2349/cg2579 (274 aa).

Residues 3-259 (VRVIVDSSAC…PGAVSVSAVF (257 aa)) enclose the DegV domain. Positions 39 and 73 each coordinate hexadecanoate.

In terms of assembly, monomer.

Binds long-chain fatty acids, such as palmitate, and may play a role in lipid transport or fatty acid metabolism. The protein is DegV domain-containing protein Cgl2349/cg2579 of Corynebacterium glutamicum (strain ATCC 13032 / DSM 20300 / JCM 1318 / BCRC 11384 / CCUG 27702 / LMG 3730 / NBRC 12168 / NCIMB 10025 / NRRL B-2784 / 534).